A 119-amino-acid polypeptide reads, in one-letter code: Large ribosomal subunit protein bL20 (119 aa).

It belongs to the bacterial ribosomal protein bL20 family.

Its function is as follows. Binds directly to 23S ribosomal RNA and is necessary for the in vitro assembly process of the 50S ribosomal subunit. It is not involved in the protein synthesizing functions of that subunit. The protein is Large ribosomal subunit protein bL20 of Jannaschia sp. (strain CCS1).